The chain runs to 1036 residues: Lethal(2) giant larvae protein homolog 1 (1036 aa).

WD repeat units follow at residues 38-71, 78-119, 139-175, 199-233, 239-271, 289-331, 339-373, 395-473, 517-592, and 601-662; these read SALAFDPELRIMAIGTRSGAVKIYGAPGVEFTGL, VTQM…GLSF, VTVVLLVAGNTAALGTESGSIFFLDVATLALLEGQTL, SLQGHLQDPSKILIGYSRGLLVIWSQATQSVDNVF, LESLCWGRDGSSIISSHSDGSYAIWSTDTGSPP, AINK…ETLV, VIDFFTVHSTQPEDECDNPQALAVLLEEELVVLDL, TCSA…YKLS, QKVA…RMLI, and TAVT…LRQS. Phosphoserine is present on Ser-662. Residues 667 to 677 show a composition bias toward basic residues; the sequence is RKSRVSGKKRT. Positions 667-688 are disordered; the sequence is RKSRVSGKKRTPAASSKLQEAN. Residues 679–688 are compositionally biased toward polar residues; the sequence is AASSKLQEAN. WD repeat units lie at residues 722 to 782, 791 to 843, 848 to 901, and 915 to 938; these read VRCL…KEVQ, AIAV…VSAK, LTAH…VHYS, and VFTRHGQGFYLISPSEFERFSLSA. Phosphothreonine is present on Thr-957. Residues Ser-964, Ser-982, and Ser-989 each carry the phosphoserine modification. A disordered region spans residues 980–1002; the sequence is PESCEGSPSSAHSKRADTMEPPE.

The protein belongs to the WD repeat L(2)GL family. In terms of assembly, associated with nonmuscle myosin II heavy chain. Interacts with PRKCI/aPKC, PARD6B/Par-6 and PARD6A. Interacts with STX4A. Interacts with RAB10 (GDP-bound form); the interaction is direct and promotes RAB10 association with membranes and activation through competition with the Rab inhibitor GDI1. Interacts with DCAF1. Post-translationally, phosphorylated by PRKCI on at least one of the following Ser residues: Ser 654, Ser-658, Ser-662, Ser-669 and Ser-672. Phosphorylation is important for appropriated cell polarization.

It is found in the early endosome membrane. Its subcellular location is the golgi apparatus. The protein resides in the trans-Golgi network membrane. The protein localises to the golgi apparatus membrane. It localises to the cell projection. It is found in the axon. Its subcellular location is the cytoplasm. The protein resides in the cytoskeleton. In terms of biological role, cortical cytoskeleton protein found in a complex involved in maintaining cell polarity and epithelial integrity. Involved in the regulation of mitotic spindle orientation, proliferation, differentiation and tissue organization of neuroepithelial cells. Involved in axonogenesis through RAB10 activation thereby regulating vesicular membrane trafficking toward the axonal plasma membrane. This Mus musculus (Mouse) protein is Lethal(2) giant larvae protein homolog 1 (Llgl1).